A 1102-amino-acid polypeptide reads, in one-letter code: Carbamoyl phosphate synthase large chain (1102 aa).

A carboxyphosphate synthetic domain region spans residues 1–408 (MPKRSDIQSV…ALQKALRSLE (408 aa)). Residues Arg-129, Arg-175, Gly-181, Gly-182, Glu-214, Ile-216, Glu-221, Gly-247, Val-248, His-249, Gln-291, and Glu-305 each contribute to the ATP site. In terms of domain architecture, ATP-grasp 1 spans 137–334 (EAVKEKIGYG…IAKIAAKLAV (198 aa)). Mg(2+) contacts are provided by Gln-291, Glu-305, and Asn-307. 3 residues coordinate Mn(2+): Gln-291, Glu-305, and Asn-307. An oligomerization domain region spans residues 409–551 (KKGSQFAFTG…YFYSSYDEES (143 aa)). Positions 552-954 (EVAPRTKPAV…AYAKSQAGAY (403 aa)) are carbamoyl phosphate synthetic domain. One can recognise an ATP-grasp 2 domain in the interval 682–873 (GRVLAEAGLP…LAKAAARISL (192 aa)). Residues Arg-718, Arg-757, Leu-759, Glu-764, Gly-789, Ile-790, His-791, Ser-792, Gln-832, and Glu-844 each coordinate ATP. Positions 832, 844, and 846 each coordinate Mg(2+). 3 residues coordinate Mn(2+): Gln-832, Glu-844, and Asn-846. The region spanning 955–1100 (GPLPTAGRAF…QEHAEHLTAA (146 aa)) is the MGS-like domain. An allosteric domain region spans residues 955–1102 (GPLPTAGRAF…HAEHLTAARD (148 aa)).

This sequence belongs to the CarB family. In terms of assembly, composed of two chains; the small (or glutamine) chain promotes the hydrolysis of glutamine to ammonia, which is used by the large (or ammonia) chain to synthesize carbamoyl phosphate. Tetramer of heterodimers (alpha,beta)4. The cofactor is Mg(2+). Mn(2+) is required as a cofactor.

The enzyme catalyses hydrogencarbonate + L-glutamine + 2 ATP + H2O = carbamoyl phosphate + L-glutamate + 2 ADP + phosphate + 2 H(+). It catalyses the reaction hydrogencarbonate + NH4(+) + 2 ATP = carbamoyl phosphate + 2 ADP + phosphate + 2 H(+). Its pathway is amino-acid biosynthesis; L-arginine biosynthesis; carbamoyl phosphate from bicarbonate: step 1/1. It participates in pyrimidine metabolism; UMP biosynthesis via de novo pathway; (S)-dihydroorotate from bicarbonate: step 1/3. In terms of biological role, large subunit of the glutamine-dependent carbamoyl phosphate synthetase (CPSase). CPSase catalyzes the formation of carbamoyl phosphate from the ammonia moiety of glutamine, carbonate, and phosphate donated by ATP, constituting the first step of 2 biosynthetic pathways, one leading to arginine and/or urea and the other to pyrimidine nucleotides. The large subunit (synthetase) binds the substrates ammonia (free or transferred from glutamine from the small subunit), hydrogencarbonate and ATP and carries out an ATP-coupled ligase reaction, activating hydrogencarbonate by forming carboxy phosphate which reacts with ammonia to form carbamoyl phosphate. The sequence is that of Carbamoyl phosphate synthase large chain from Streptomyces griseus subsp. griseus (strain JCM 4626 / CBS 651.72 / NBRC 13350 / KCC S-0626 / ISP 5235).